We begin with the raw amino-acid sequence, 192 residues long: Elongation factor P (192 aa).

This sequence belongs to the elongation factor P family.

The protein localises to the cytoplasm. Its pathway is protein biosynthesis; polypeptide chain elongation. Functionally, involved in peptide bond synthesis. Stimulates efficient translation and peptide-bond synthesis on native or reconstituted 70S ribosomes in vitro. Probably functions indirectly by altering the affinity of the ribosome for aminoacyl-tRNA, thus increasing their reactivity as acceptors for peptidyl transferase. The protein is Elongation factor P of Borrelia hermsii (strain HS1 / DAH).